The chain runs to 237 residues: Ribonuclease PH (237 aa).

Residues Arg-86 and 124–126 contribute to the phosphate site; that span reads GTR.

It belongs to the RNase PH family. Homohexameric ring arranged as a trimer of dimers.

The enzyme catalyses tRNA(n+1) + phosphate = tRNA(n) + a ribonucleoside 5'-diphosphate. Phosphorolytic 3'-5' exoribonuclease that plays an important role in tRNA 3'-end maturation. Removes nucleotide residues following the 3'-CCA terminus of tRNAs; can also add nucleotides to the ends of RNA molecules by using nucleoside diphosphates as substrates, but this may not be physiologically important. Probably plays a role in initiation of 16S rRNA degradation (leading to ribosome degradation) during starvation. The protein is Ribonuclease PH of Methylorubrum extorquens (strain CM4 / NCIMB 13688) (Methylobacterium extorquens).